We begin with the raw amino-acid sequence, 370 residues long: Queuine tRNA-ribosyltransferase (370 aa).

The Proton acceptor role is filled by Asp-89. Residues 89–93, Asp-143, Gln-187, and Gly-214 contribute to the substrate site; that span reads DSGGF. The RNA binding stretch occupies residues 245 to 251; it reads GVGTPED. The active-site Nucleophile is Asp-264. The RNA binding; important for wobble base 34 recognition stretch occupies residues 269 to 273; that stretch reads TRNAR. Positions 302, 304, 307, and 333 each coordinate Zn(2+).

The protein belongs to the queuine tRNA-ribosyltransferase family. Homodimer. Within each dimer, one monomer is responsible for RNA recognition and catalysis, while the other monomer binds to the replacement base PreQ1. Zn(2+) is required as a cofactor.

The enzyme catalyses 7-aminomethyl-7-carbaguanine + guanosine(34) in tRNA = 7-aminomethyl-7-carbaguanosine(34) in tRNA + guanine. The protein operates within tRNA modification; tRNA-queuosine biosynthesis. In terms of biological role, catalyzes the base-exchange of a guanine (G) residue with the queuine precursor 7-aminomethyl-7-deazaguanine (PreQ1) at position 34 (anticodon wobble position) in tRNAs with GU(N) anticodons (tRNA-Asp, -Asn, -His and -Tyr). Catalysis occurs through a double-displacement mechanism. The nucleophile active site attacks the C1' of nucleotide 34 to detach the guanine base from the RNA, forming a covalent enzyme-RNA intermediate. The proton acceptor active site deprotonates the incoming PreQ1, allowing a nucleophilic attack on the C1' of the ribose to form the product. After dissociation, two additional enzymatic reactions on the tRNA convert PreQ1 to queuine (Q), resulting in the hypermodified nucleoside queuosine (7-(((4,5-cis-dihydroxy-2-cyclopenten-1-yl)amino)methyl)-7-deazaguanosine). The sequence is that of Queuine tRNA-ribosyltransferase from Aromatoleum aromaticum (strain DSM 19018 / LMG 30748 / EbN1) (Azoarcus sp. (strain EbN1)).